Here is a 155-residue protein sequence, read N- to C-terminus: Endoribonuclease YbeY (155 aa).

Residues His-114, His-118, and His-124 each coordinate Zn(2+).

The protein belongs to the endoribonuclease YbeY family. Zn(2+) is required as a cofactor.

The protein resides in the cytoplasm. Its function is as follows. Single strand-specific metallo-endoribonuclease involved in late-stage 70S ribosome quality control and in maturation of the 3' terminus of the 16S rRNA. In Erwinia tasmaniensis (strain DSM 17950 / CFBP 7177 / CIP 109463 / NCPPB 4357 / Et1/99), this protein is Endoribonuclease YbeY.